We begin with the raw amino-acid sequence, 276 residues long: NAD kinase (276 aa).

The active-site Proton acceptor is the aspartate 68. NAD(+) is bound by residues 68-69 (DG), arginine 73, 138-139 (NE), lysine 149, aspartate 168, 179-184 (TAYSLS), and glutamine 237.

The protein belongs to the NAD kinase family. A divalent metal cation is required as a cofactor.

The protein resides in the cytoplasm. It catalyses the reaction NAD(+) + ATP = ADP + NADP(+) + H(+). Its function is as follows. Involved in the regulation of the intracellular balance of NAD and NADP, and is a key enzyme in the biosynthesis of NADP. Catalyzes specifically the phosphorylation on 2'-hydroxyl of the adenosine moiety of NAD to yield NADP. This Methanopyrus kandleri (strain AV19 / DSM 6324 / JCM 9639 / NBRC 100938) protein is NAD kinase.